A 391-amino-acid chain; its full sequence is Transforming growth factor beta-1 proprotein (391 aa).

A signal peptide spans 1-18 (MDPSPLLALLLLLGAARA). The segment at 19-63 (LSTCQRLDLEAAKKKRIEAVRGQILSKLRLTAPPPASETPPRPLP) is straightjacket domain. The tract at residues 64–270 (DDVRALYNST…ALPAERANEL (207 aa)) is arm domain. Asn71, Asn126, and Asn171 each carry an N-linked (GlcNAc...) asparagine glycan. The tract at residues 221–249 (EMGPGHADEMRISIEGFEQQRGDMQSIAK) is bowtie tail. The short motif at 241–243 (RGD) is the Cell attachment site element. Intrachain disulfides connect Cys284/Cys295, Cys294/Cys357, Cys323/Cys388, and Cys327/Cys390.

Belongs to the TGF-beta family. Latency-associated peptide: Homodimer; disulfide-linked. Latency-associated peptide: Interacts with Transforming growth factor beta-1 (TGF-beta-1) chain; interaction is non-covalent and maintains (TGF-beta-1) in a latent state; each Latency-associated peptide (LAP) monomer interacts with TGF-beta-1 in the other monomer. Transforming growth factor beta-1: Homodimer; disulfide-linked. Transforming growth factor beta-1: Interacts with TGF-beta receptors (TGFBR1 and TGFBR2), leading to signal transduction. Post-translationally, transforming growth factor beta-1 proprotein: The precursor proprotein is cleaved in the Golgi apparatus to form Transforming growth factor beta-1 (TGF-beta-1) and Latency-associated peptide (LAP) chains, which remain non-covalently linked, rendering TGF-beta-1 inactive.

It localises to the secreted. The protein resides in the extracellular space. Its subcellular location is the extracellular matrix. In terms of biological role, transforming growth factor beta-1 proprotein: Precursor of the Latency-associated peptide (LAP) and Transforming growth factor beta-1 (TGF-beta-1) chains, which constitute the regulatory and active subunit of TGF-beta-1, respectively. Its function is as follows. Required to maintain the Transforming growth factor beta-1 (TGF-beta-1) chain in a latent state during storage in extracellular matrix. Associates non-covalently with TGF-beta-1 and regulates its activation via interaction with 'milieu molecules', such as LTBP1, LRRC32/GARP and LRRC33/NRROS, that control activation of TGF-beta-1. Interaction with integrins (ITGAV:ITGB6 or ITGAV:ITGB8) results in distortion of the Latency-associated peptide chain and subsequent release of the active TGF-beta-1. Transforming growth factor beta-1: Multifunctional protein that regulates the growth and differentiation of various cell types and is involved in various processes, such as normal development, immune function, microglia function and responses to neurodegeneration. Activation into mature form follows different steps: following cleavage of the proprotein in the Golgi apparatus, Latency-associated peptide (LAP) and Transforming growth factor beta-1 (TGF-beta-1) chains remain non-covalently linked rendering TGF-beta-1 inactive during storage in extracellular matrix. At the same time, LAP chain interacts with 'milieu molecules', such as LTBP1, LRRC32/GARP and LRRC33/NRROS that control activation of TGF-beta-1 and maintain it in a latent state during storage in extracellular milieus. TGF-beta-1 is released from LAP by integrins (ITGAV:ITGB6 or ITGAV:ITGB8): integrin-binding to LAP stabilizes an alternative conformation of the LAP bowtie tail and results in distortion of the LAP chain and subsequent release of the active TGF-beta-1. Once activated following release of LAP, TGF-beta-1 acts by binding to TGF-beta receptors (TGFBR1 and TGFBR2), which transduce signal. While expressed by many cells types, TGF-beta-1 only has a very localized range of action within cell environment thanks to fine regulation of its activation by Latency-associated peptide chain (LAP) and 'milieu molecules'. Plays an important role in bone remodeling: acts as a potent stimulator of osteoblastic bone formation. Can promote either T-helper 17 cells (Th17) or regulatory T-cells (Treg) lineage differentiation in a concentration-dependent manner. Can induce epithelial-to-mesenchymal transition (EMT) and cell migration in various cell types. This chain is Transforming growth factor beta-1 proprotein (TGFB1), found in Gallus gallus (Chicken).